Reading from the N-terminus, the 310-residue chain is Glutaminase (310 aa).

7 residues coordinate substrate: Ser66, Asn117, Glu161, Asn168, Tyr192, Tyr244, and Val262.

The protein belongs to the glutaminase family. In terms of assembly, homotetramer.

It carries out the reaction L-glutamine + H2O = L-glutamate + NH4(+). The chain is Glutaminase from Desulfovibrio desulfuricans (strain ATCC 27774 / DSM 6949 / MB).